Reading from the N-terminus, the 509-residue chain is MEFSPRAAELTTLLESRMTNFYTNFQVDEIGRVVSVGDGIARVYGLNEIQAGEMVEFASGVKGIALNLENENVGIVVFGSDTAIKEGDLVKRTGSIVDVPAGKAMLGRVVDALGVPIDGKGALSDHERRRVEVKAPGIIERKSVHEPMQTGLKAVDSLVPIGRGQRELIIGDRQTGKTAIAIDTILNQKQMNSRGTNESETLYCVYVAIGQKRSTVAQLVQILSEANALEYSILVAATASDPAPLQFLAPYSGCAMGEYFRDNGMHALIIYDDLSKQAVAYRQMSLLLRRPPGREAFPGDVFYLHSRLLERAAKRSDQTGAGSLTALPVIETQAGDVSAYIPTNVISITDGQICLETELFYRGIRPAINVGLSVSRVGSAAQLKAMKQVCGSLKLELAQYREVAAFAQFGSDLDAATQALLNRGARLTEVSKQPQYEPLPIEKQIVVIYAAVNGFCDRMPLDRISQYEKAILSTINPELLKSFNEKGGLTNERKIELDAFLKQTAKEIN.

171-178 (GDRQTGKT) contacts ATP.

The protein belongs to the ATPase alpha/beta chains family. F-type ATPases have 2 components, CF(1) - the catalytic core - and CF(0) - the membrane proton channel. CF(1) has five subunits: alpha(3), beta(3), gamma(1), delta(1), epsilon(1). CF(0) has three main subunits: a, b and c.

Its subcellular location is the mitochondrion. It localises to the mitochondrion inner membrane. Mitochondrial membrane ATP synthase (F(1)F(0) ATP synthase or Complex V) produces ATP from ADP in the presence of a proton gradient across the membrane which is generated by electron transport complexes of the respiratory chain. F-type ATPases consist of two structural domains, F(1) - containing the extramembraneous catalytic core, and F(0) - containing the membrane proton channel, linked together by a central stalk and a peripheral stalk. During catalysis, ATP synthesis in the catalytic domain of F(1) is coupled via a rotary mechanism of the central stalk subunits to proton translocation. Subunits alpha and beta form the catalytic core in F(1). Rotation of the central stalk against the surrounding alpha(3)beta(3) subunits leads to hydrolysis of ATP in three separate catalytic sites on the beta subunits. Subunit alpha does not bear the catalytic high-affinity ATP-binding sites. This is ATP synthase subunit alpha, mitochondrial (ATPA) from Oryza sativa subsp. indica (Rice).